The primary structure comprises 365 residues: Histidinol-phosphate aminotransferase (365 aa).

Position 221 is an N6-(pyridoxal phosphate)lysine (Lys221).

The protein belongs to the class-II pyridoxal-phosphate-dependent aminotransferase family. Histidinol-phosphate aminotransferase subfamily. In terms of assembly, homodimer. Pyridoxal 5'-phosphate is required as a cofactor.

The enzyme catalyses L-histidinol phosphate + 2-oxoglutarate = 3-(imidazol-4-yl)-2-oxopropyl phosphate + L-glutamate. The protein operates within amino-acid biosynthesis; L-histidine biosynthesis; L-histidine from 5-phospho-alpha-D-ribose 1-diphosphate: step 7/9. This is Histidinol-phosphate aminotransferase from Nitrobacter hamburgensis (strain DSM 10229 / NCIMB 13809 / X14).